A 335-amino-acid chain; its full sequence is Biotin synthase (335 aa).

A disordered region spans residues 1 to 20 (MVSVGTQSHSGRDQAEQNPS). One can recognise a Radical SAM core domain in the interval 59–284 (GHLQKSSLLS…MMPQSMVRLS (226 aa)). The [4Fe-4S] cluster site is built by Cys-74, Cys-78, and Cys-81. [2Fe-2S] cluster is bound by residues Cys-118, Cys-150, Cys-210, and Arg-282.

This sequence belongs to the radical SAM superfamily. Biotin synthase family. Homodimer. Requires [4Fe-4S] cluster as cofactor. It depends on [2Fe-2S] cluster as a cofactor.

The enzyme catalyses (4R,5S)-dethiobiotin + (sulfur carrier)-SH + 2 reduced [2Fe-2S]-[ferredoxin] + 2 S-adenosyl-L-methionine = (sulfur carrier)-H + biotin + 2 5'-deoxyadenosine + 2 L-methionine + 2 oxidized [2Fe-2S]-[ferredoxin]. The protein operates within cofactor biosynthesis; biotin biosynthesis; biotin from 7,8-diaminononanoate: step 2/2. Its function is as follows. Catalyzes the conversion of dethiobiotin (DTB) to biotin by the insertion of a sulfur atom into dethiobiotin via a radical-based mechanism. The polypeptide is Biotin synthase (Zymomonas mobilis subsp. mobilis (strain ATCC 31821 / ZM4 / CP4)).